A 213-amino-acid chain; its full sequence is Octanoyltransferase (213 aa).

Residues 32-207 (ENSHDEIWLV…NILALLNNPP (176 aa)) enclose the BPL/LPL catalytic domain. Residues 71-78 (RGGQVTYH), 138-140 (SLG), and 151-153 (GLA) contribute to the substrate site. Residue Cys169 is the Acyl-thioester intermediate of the active site.

The protein belongs to the LipB family.

Its subcellular location is the cytoplasm. The catalysed reaction is octanoyl-[ACP] + L-lysyl-[protein] = N(6)-octanoyl-L-lysyl-[protein] + holo-[ACP] + H(+). It functions in the pathway protein modification; protein lipoylation via endogenous pathway; protein N(6)-(lipoyl)lysine from octanoyl-[acyl-carrier-protein]: step 1/2. Functionally, catalyzes the transfer of endogenously produced octanoic acid from octanoyl-acyl-carrier-protein onto the lipoyl domains of lipoate-dependent enzymes. Lipoyl-ACP can also act as a substrate although octanoyl-ACP is likely to be the physiological substrate. The polypeptide is Octanoyltransferase (Salmonella paratyphi A (strain ATCC 9150 / SARB42)).